Reading from the N-terminus, the 232-residue chain is Ubiquinone biosynthesis O-methyltransferase (232 aa).

4 residues coordinate S-adenosyl-L-methionine: arginine 36, glycine 55, aspartate 76, and leucine 120.

This sequence belongs to the methyltransferase superfamily. UbiG/COQ3 family.

It catalyses the reaction a 3-demethylubiquinol + S-adenosyl-L-methionine = a ubiquinol + S-adenosyl-L-homocysteine + H(+). It carries out the reaction a 3-(all-trans-polyprenyl)benzene-1,2-diol + S-adenosyl-L-methionine = a 2-methoxy-6-(all-trans-polyprenyl)phenol + S-adenosyl-L-homocysteine + H(+). It participates in cofactor biosynthesis; ubiquinone biosynthesis. O-methyltransferase that catalyzes the 2 O-methylation steps in the ubiquinone biosynthetic pathway. This Pseudomonas putida (strain GB-1) protein is Ubiquinone biosynthesis O-methyltransferase.